The chain runs to 223 residues: Guanylate kinase (223 aa).

Positions Gly-6–Thr-183 constitute a Guanylate kinase-like domain. An ATP-binding site is contributed by Gly-13–Gly-20.

Belongs to the guanylate kinase family.

It is found in the cytoplasm. The catalysed reaction is GMP + ATP = GDP + ADP. In terms of biological role, essential for recycling GMP and indirectly, cGMP. This Thermus thermophilus (strain ATCC 27634 / DSM 579 / HB8) protein is Guanylate kinase.